The chain runs to 340 residues: 4-hydroxy-3-methylbut-2-enyl diphosphate reductase (340 aa).

Cys-13 lines the [4Fe-4S] cluster pocket. 2 residues coordinate (2E)-4-hydroxy-3-methylbut-2-enyl diphosphate: His-42 and His-75. Dimethylallyl diphosphate-binding residues include His-42 and His-75. Residues His-42 and His-75 each coordinate isopentenyl diphosphate. Cys-97 serves as a coordination point for [4Fe-4S] cluster. (2E)-4-hydroxy-3-methylbut-2-enyl diphosphate is bound at residue His-125. His-125 contacts dimethylallyl diphosphate. His-125 is a binding site for isopentenyl diphosphate. The active-site Proton donor is Glu-127. Thr-165 contacts (2E)-4-hydroxy-3-methylbut-2-enyl diphosphate. A [4Fe-4S] cluster-binding site is contributed by Cys-195. (2E)-4-hydroxy-3-methylbut-2-enyl diphosphate-binding residues include Ser-223, Ser-224, Asn-225, and Ser-267. Dimethylallyl diphosphate-binding residues include Ser-223, Ser-224, Asn-225, and Ser-267. Isopentenyl diphosphate is bound by residues Ser-223, Ser-224, Asn-225, and Ser-267. Residues 317-340 (NNLDNKTAASEEADSLSNDTEQEA) form a disordered region. The segment covering 331–340 (SLSNDTEQEA) has biased composition (polar residues).

Belongs to the IspH family. The cofactor is [4Fe-4S] cluster.

It catalyses the reaction isopentenyl diphosphate + 2 oxidized [2Fe-2S]-[ferredoxin] + H2O = (2E)-4-hydroxy-3-methylbut-2-enyl diphosphate + 2 reduced [2Fe-2S]-[ferredoxin] + 2 H(+). The enzyme catalyses dimethylallyl diphosphate + 2 oxidized [2Fe-2S]-[ferredoxin] + H2O = (2E)-4-hydroxy-3-methylbut-2-enyl diphosphate + 2 reduced [2Fe-2S]-[ferredoxin] + 2 H(+). It functions in the pathway isoprenoid biosynthesis; dimethylallyl diphosphate biosynthesis; dimethylallyl diphosphate from (2E)-4-hydroxy-3-methylbutenyl diphosphate: step 1/1. It participates in isoprenoid biosynthesis; isopentenyl diphosphate biosynthesis via DXP pathway; isopentenyl diphosphate from 1-deoxy-D-xylulose 5-phosphate: step 6/6. Catalyzes the conversion of 1-hydroxy-2-methyl-2-(E)-butenyl 4-diphosphate (HMBPP) into a mixture of isopentenyl diphosphate (IPP) and dimethylallyl diphosphate (DMAPP). Acts in the terminal step of the DOXP/MEP pathway for isoprenoid precursor biosynthesis. The protein is 4-hydroxy-3-methylbut-2-enyl diphosphate reductase of Zymomonas mobilis subsp. mobilis (strain ATCC 31821 / ZM4 / CP4).